Consider the following 771-residue polypeptide: Carnitine O-palmitoyltransferase 1, muscle isoform (771 aa).

Residues 1–47 (MAEAHQAVAFQFTVTPEGVDFQLSREVLKHIYLSVIRSWKKRLIRIK) are Cytoplasmic-facing. Residues 48–73 (NGILRGVYPGSPTSWLVVVMATAGSS) traverse the membrane as a helical segment. Over 74–101 (YYNVDISMGLVYYIQRWLPEGRPYRTPY) the chain is Mitochondrial intermembrane. A helical membrane pass occupies residues 102–121 (TRTLFSMAIFSTGVWMMGIF). Residues 122–771 (FFRQTLKLLL…NLFQVPKADG (650 aa)) are Cytoplasmic-facing. The active-site Proton acceptor is the histidine 472. 554 to 566 (GKGLIKKCRTSPD) lines the CoA pocket. Residues tyrosine 588 and threonine 601 each coordinate (R)-carnitine.

Belongs to the carnitine/choline acetyltransferase family.

The protein localises to the mitochondrion outer membrane. The catalysed reaction is (R)-carnitine + hexadecanoyl-CoA = O-hexadecanoyl-(R)-carnitine + CoA. It participates in lipid metabolism; fatty acid beta-oxidation. Functionally, catalyzes the transfer of the acyl group of long-chain fatty acid-CoA conjugates onto carnitine, an essential step for the mitochondrial uptake of long-chain fatty acids and their subsequent beta-oxidation in the mitochondrion. The protein is Carnitine O-palmitoyltransferase 1, muscle isoform (CPT1B) of Bos taurus (Bovine).